The primary structure comprises 86 residues: Large ribosomal subunit protein uL23 (86 aa).

Belongs to the universal ribosomal protein uL23 family. As to quaternary structure, part of the 50S ribosomal subunit. Contacts protein L29.

In terms of biological role, binds to 23S rRNA. One of the proteins that surrounds the polypeptide exit tunnel on the outside of the ribosome. The protein is Large ribosomal subunit protein uL23 of Thermococcus sibiricus (strain DSM 12597 / MM 739).